A 329-amino-acid polypeptide reads, in one-letter code: Thioredoxin domain-containing protein 6 (329 aa).

Positions 11–115 constitute a Thioredoxin domain; it reads QVNINTQELW…QKTILQQLEA (105 aa). The interval 157–303 is NDK; that stretch reads GKTCTLGIIK…LFPSFKFSDK (147 aa). A disordered region spans residues 303-329; it reads KDKEAPPGAEAQTMVGPVEDPCMSERI.

The protein belongs to the NDK family. As to quaternary structure, monomer and homodimer. Expressed in lung airway epithelium (at protein level).

The protein localises to the cytoplasm. Its subcellular location is the cytoskeleton. The protein resides in the cilium axoneme. It is found in the dynein axonemal particle. Functionally, may be a regulator of microtubule physiology. This is Thioredoxin domain-containing protein 6 from Mus musculus (Mouse).